Reading from the N-terminus, the 726-residue chain is Netrin-A (726 aa).

An N-terminal signal peptide occupies residues 1–29 (MIRGILLLLLGTTRFSPIQCISNDVYFKM). One can recognise a Laminin N-terminal domain in the interval 46-312 (EPRACIPDFV…AISDFSVGGR (267 aa)). N-linked (GlcNAc...) asparagine glycans are attached at residues N108, N112, and N127. 12 disulfide bridges follow: C313–C322, C315–C332, C334–C343, C346–C366, C369–C378, C371–C396, C399–C408, C411–C429, C432–C444, C434–C451, C453–C462, and C465–C479. Laminin EGF-like domains are found at residues 313 to 368 (CKCN…ECKE), 369 to 431 (CNCN…VCKA), and 432 to 481 (CDCH…PCIK). N-linked (GlcNAc...) asparagine glycosylation is present at N445. The disordered stretch occupies residues 490–516 (LDTQNTAPEPDEPESSPGSGGDRNGAA). Intrachain disulfides connect C533-C671 and C549-C725. The NTR domain maps to 533–725 (CGKCRVSTKR…KRFQRRARTC (193 aa)). N652 and N679 each carry an N-linked (GlcNAc...) asparagine glycan.

At the midline of developing CNS at the time of commissure formation and in different subsets of neurons, muscles, and epidermal patches.

The protein resides in the secreted. It localises to the extracellular space. The protein localises to the extracellular matrix. Its function is as follows. Netrins control guidance of CNS commissural axons at the midline and peripheral motor axons to their target muscles. This is Netrin-A (NetA) from Drosophila melanogaster (Fruit fly).